Reading from the N-terminus, the 230-residue chain is Large ribosomal subunit protein uL1 (230 aa).

This sequence belongs to the universal ribosomal protein uL1 family. In terms of assembly, part of the 50S ribosomal subunit.

Binds directly to 23S rRNA. The L1 stalk is quite mobile in the ribosome, and is involved in E site tRNA release. In terms of biological role, protein L1 is also a translational repressor protein, it controls the translation of the L11 operon by binding to its mRNA. The protein is Large ribosomal subunit protein uL1 of Chromohalobacter salexigens (strain ATCC BAA-138 / DSM 3043 / CIP 106854 / NCIMB 13768 / 1H11).